We begin with the raw amino-acid sequence, 198 residues long: MEITIEMIKELRERTGAGVMEAKKALEEANGDMEKAVTILREKGVIKAAKKAGRVAKEGIIEAYIHTGDKLGVLVEINCETDFVARTDEFRKLAKDIALQIAGMNPQYVSKEDVPPEVIEKEKEIYRTQLRNEGKPEHVIEKIIEGKLEKFYEEVCLLEQPFVRNPEIKVKDLITEAISKLGENIVVRRFARFVVGEE.

Residues 81-84 (TDFV) form an involved in Mg(2+) ion dislocation from EF-Tu region.

The protein belongs to the EF-Ts family.

Its subcellular location is the cytoplasm. In terms of biological role, associates with the EF-Tu.GDP complex and induces the exchange of GDP to GTP. It remains bound to the aminoacyl-tRNA.EF-Tu.GTP complex up to the GTP hydrolysis stage on the ribosome. The protein is Elongation factor Ts of Dictyoglomus turgidum (strain DSM 6724 / Z-1310).